The chain runs to 488 residues: Tripartite motif-containing protein 6 (488 aa).

The RING-type zinc-finger motif lies at 15-60; that stretch reads CPICLELLTEPLSIDCGHSFCQVCIIGNSNNSVFGQGGRSSCPVCR. Residues 92 to 133 form a B box-type zinc finger; it reads LEVIFCALHGEKLQLFCKEDGKLICWLCERSQEHRGHHTFLM. Residues Cys97, His100, Cys119, and His125 each coordinate Zn(2+). Residues 132-223 are a coiled coil; that stretch reads LMEEVAQEYQ…SIIEKAEGDL (92 aa). Positions 282-488 constitute a B30.2/SPRY domain; the sequence is DLRKMLKVFR…VPMTLRRPTS (207 aa).

Belongs to the TRIM/RBCC family. In terms of assembly, homotrimer. Forms heteromultimers (via B30.2/SPRY domain) with TRIM5. Interacts with MYC. Interacts (via SPRY domain) with IKBKE. Interacts with VAMP8; this interaction contributes to the activation of the type I interferon antiviral response. Interacts with DHX16.

The protein localises to the cytoplasm. The catalysed reaction is S-ubiquitinyl-[E2 ubiquitin-conjugating enzyme]-L-cysteine + [acceptor protein]-L-lysine = [E2 ubiquitin-conjugating enzyme]-L-cysteine + N(6)-ubiquitinyl-[acceptor protein]-L-lysine.. It participates in protein modification; protein ubiquitination. Functionally, E3 ubiquitin ligase that plays a crucial role in the activation of the IKBKE-dependent branch of the type I interferon signaling pathway. In concert with the ubiquitin-conjugating E2 enzyme UBE2K, synthesizes unanchored 'Lys-48'-linked polyubiquitin chains that promote the oligomerization and autophosphorylation of IKBKE leading to stimulation of an antiviral response. Also ubiquitinates MYC and inhibits its transcription activation activity, maintaining the pluripotency of embryonic stem cells. Promotes the association of unanchored 'Lys-48'-polyubiquitin chains with DHX16 leading to enhancement of RIGI-mediated innate antiviral immune response. The polypeptide is Tripartite motif-containing protein 6 (Trim6) (Mus musculus (Mouse)).